Here is a 259-residue protein sequence, read N- to C-terminus: Deoxyribose-phosphate aldolase (259 aa).

Catalysis depends on aspartate 102, which acts as the Proton donor/acceptor. Lysine 167 (schiff-base intermediate with acetaldehyde) is an active-site residue. Lysine 201 (proton donor/acceptor) is an active-site residue.

This sequence belongs to the DeoC/FbaB aldolase family. DeoC type 2 subfamily.

The protein resides in the cytoplasm. The enzyme catalyses 2-deoxy-D-ribose 5-phosphate = D-glyceraldehyde 3-phosphate + acetaldehyde. Its pathway is carbohydrate degradation; 2-deoxy-D-ribose 1-phosphate degradation; D-glyceraldehyde 3-phosphate and acetaldehyde from 2-deoxy-alpha-D-ribose 1-phosphate: step 2/2. In terms of biological role, catalyzes a reversible aldol reaction between acetaldehyde and D-glyceraldehyde 3-phosphate to generate 2-deoxy-D-ribose 5-phosphate. The protein is Deoxyribose-phosphate aldolase of Klebsiella pneumoniae (strain 342).